The following is a 430-amino-acid chain: Endochitinase 46 (430 aa).

A signal peptide spans 1 to 22 (MLSFLGKSVALLAALQATLSSA). Residues 23–35 (SPLATEERSIEKR) constitute a propeptide that is removed on maturation. Residues 39-408 (YANSVYFTNW…GTSHRALGGL (370 aa)) enclose the GH18 domain. Chitin contacts are provided by residues 103 to 104 (GT) and 130 to 133 (GGWT). Catalysis depends on Glu-172, which acts as the Proton donor. Position 173 (Tyr-173) interacts with chitin. Asn-219 carries an N-linked (GlcNAc...) asparagine glycan. Chitin-binding positions include 238 to 241 (MAYD) and Trp-385.

Belongs to the glycosyl hydrolase 18 family. Chitinase class V subfamily.

The protein resides in the secreted. The catalysed reaction is Random endo-hydrolysis of N-acetyl-beta-D-glucosaminide (1-&gt;4)-beta-linkages in chitin and chitodextrins.. In terms of biological role, secreted chitinase involved in the degradation of chitin, a component of the cell walls of fungi and exoskeletal elements of some animals (including worms and arthropods). Plays a morphogenetic role during apical growth, cell division and differentiation (cell wall morphogenesis). Also acts as an antifungal agent. Involved in the degradation and further assimilation of phytopathogenic fungi, namely mycoparasitism, the major mechanism accounting for the antagonistic activity against phytopathogenic fungi displayed by Trichoderma. In Trichoderma harzianum (Hypocrea lixii), this protein is Endochitinase 46 (chit46).